Reading from the N-terminus, the 402-residue chain is RNA-binding protein 42 (402 aa).

Residues 240 to 275 are disordered; sequence ETASDDSVIGPSMPEPEPVHVEPVDTSTEDKKKGKQ. Basic and acidic residues predominate over residues 256-275; the sequence is EPVHVEPVDTSTEDKKKGKQ. The RRM domain maps to 303–381; it reads FRIFCGDLGN…RPIKLRKSAW (79 aa).

This sequence belongs to the RRM RBM42 family.

Its subcellular location is the nucleus. It is found in the cytoplasm. In terms of biological role, may bind RNA. This Danio rerio (Zebrafish) protein is RNA-binding protein 42 (rbm42).